Here is an 83-residue protein sequence, read N- to C-terminus: MADQENSPLHTVGFDARFPQQNQTKHCWQSYVDYHKCVNMKGEDFAPCKVFWKTYNALCPLDWIEKWDDQREKGIFAGDINSD.

The region spanning 24–67 is the CHCH domain; sequence TKHCWQSYVDYHKCVNMKGEDFAPCKVFWKTYNALCPLDWIEKW. The Cx9C motif signature appears at 27-37; the sequence is CWQSYVDYHKC. Intrachain disulfides connect Cys27–Cys59 and Cys37–Cys48. Positions 48–59 match the Cx10C motif motif; that stretch reads CKVFWKTYNALC. Ser82 bears the Phosphoserine mark.

It belongs to the cytochrome c oxidase subunit 6B family. As to quaternary structure, component of the cytochrome c oxidase (complex IV, CIV), a multisubunit enzyme composed of 12 subunits. The complex is composed of a catalytic core of 3 subunits COX1, COX2 and COX3, encoded in the mitochondrial DNA, and 9 supernumerary subunits COX4, COX5A (or COX5B), COX6, COX7, COX8, COX9, COX12, COX13 and COX26, which are encoded in the nuclear genome. The complex exists as a monomer or a dimer and forms supercomplexes (SCs) in the inner mitochondrial membrane with a dimer of ubiquinol-cytochrome c oxidoreductase (cytochrome b-c1 complex, complex III, CIII), resulting in 2 different assemblies (supercomplexes III(2)IV and III(2)IV(2)).

The protein resides in the mitochondrion inner membrane. The protein operates within energy metabolism; oxidative phosphorylation. Functionally, component of the cytochrome c oxidase, the last enzyme in the mitochondrial electron transport chain which drives oxidative phosphorylation. The respiratory chain contains 3 multisubunit complexes succinate dehydrogenase (complex II, CII), ubiquinol-cytochrome c oxidoreductase (cytochrome b-c1 complex, complex III, CIII) and cytochrome c oxidase (complex IV, CIV), that cooperate to transfer electrons derived from NADH and succinate to molecular oxygen, creating an electrochemical gradient over the inner membrane that drives transmembrane transport and the ATP synthase. Cytochrome c oxidase is the component of the respiratory chain that catalyzes the reduction of oxygen to water. Electrons originating from reduced cytochrome c in the intermembrane space (IMS) are transferred via the dinuclear copper A center (CU(A)) of COX2 and heme A of COX1 to the active site in COX1, a binuclear center (BNC) formed by heme A3 and copper B (CU(B)). The BNC reduces molecular oxygen to 2 water molecules unsing 4 electrons from cytochrome c in the IMS and 4 protons from the mitochondrial matrix. The sequence is that of Cytochrome c oxidase subunit 12, mitochondrial (COX12) from Saccharomyces cerevisiae (strain ATCC 204508 / S288c) (Baker's yeast).